The sequence spans 93 residues: Acylphosphatase (93 aa).

The region spanning R6–R93 is the Acylphosphatase-like domain. Catalysis depends on residues R21 and N40.

The protein belongs to the acylphosphatase family.

The enzyme catalyses an acyl phosphate + H2O = a carboxylate + phosphate + H(+). This Streptomyces coelicolor (strain ATCC BAA-471 / A3(2) / M145) protein is Acylphosphatase (acyP).